The following is a 598-amino-acid chain: Leucine aminopeptidase 2, chloroplastic (598 aa).

The transit peptide at 1-71 (MATAASTSAA…GHRARMGHTA (71 aa)) directs the protein to the chloroplast. Lys367 and Asp372 together coordinate Mn(2+). The active site involves Lys379. The Mn(2+) site is built by Asp392, Asp452, and Glu454. Residue Arg456 is part of the active site.

It belongs to the peptidase M17 family. In terms of assembly, homohexamer (dimer of homotrimers). Mn(2+) is required as a cofactor.

The protein localises to the plastid. It is found in the chloroplast. The enzyme catalyses Release of an N-terminal amino acid, Xaa-|-Yaa-, in which Xaa is preferably Leu, but may be other amino acids including Pro although not Arg or Lys, and Yaa may be Pro. Amino acid amides and methyl esters are also readily hydrolyzed, but rates on arylamides are exceedingly low.. It catalyses the reaction Release of N-terminal proline from a peptide.. Its function is as follows. Presumably involved in the processing and regular turnover of intracellular proteins. Catalyzes the removal of unsubstituted N-terminal amino acids from various peptides. This Oryza sativa subsp. japonica (Rice) protein is Leucine aminopeptidase 2, chloroplastic.